A 353-amino-acid chain; its full sequence is MTIALGKFTKDEKDLFDIMDDWLRRDRFVFVGWSGLLLFPCAYFAVGGWFTGTTFVTSWYTHGLASSYLEGCNFLTAAVSTPANSLAHSLLLLWGPEAQGDFTRWCQLGGLWTFVALHGAFGLIGFMLRQFELARSVQLRPYNAIAFSGPIAVFVSVFLIYPLGQSGWFFAPSFGVAAIFRFILFFQGFHNWTLNPFHMMGVAGVLGAALLCAIHGATVENTLFEDGDGANTFRAFNPTQAEETYSMVTANRFWSQIFGVAFSNKRWLHFFMLFVPVTGLWMSALGVVGLALNLRAYDFVSQEIRAAEDPEFETFYTKNILLNEGIRAWMAAQDQPHENLIFPEEVLPRGNAL.

An N-acetylthreonine modification is found at T2. T2 carries the post-translational modification Phosphothreonine. A helical membrane pass occupies residues 41–61; sequence CAYFAVGGWFTGTTFVTSWYT. H118 contributes to the chlorophyll a binding site. The helical transmembrane segment at 125–141 threads the bilayer; the sequence is GFMLRQFELARSVQLRP. Pheophytin a is bound by residues Q130 and N143. The helical transmembrane segment at 153 to 166 threads the bilayer; it reads VFVSVFLIYPLGQS. Chlorophyll a is bound at residue H198. A helical transmembrane segment spans residues 208–228; sequence AALLCAIHGATVENTLFEDGD. H215 and F262 together coordinate a plastoquinone. H215 is a binding site for Fe cation. Fe cation is bound at residue H269. A helical transmembrane segment spans residues 279-295; the sequence is GLWMSALGVVGLALNLR.

Belongs to the reaction center PufL/M/PsbA/D family. In terms of assembly, PSII is composed of 1 copy each of membrane proteins PsbA, PsbB, PsbC, PsbD, PsbE, PsbF, PsbH, PsbI, PsbJ, PsbK, PsbL, PsbM, PsbT, PsbX, PsbY, PsbZ, Psb30/Ycf12, at least 3 peripheral proteins of the oxygen-evolving complex and a large number of cofactors. It forms dimeric complexes. The cofactor is The D1/D2 heterodimer binds P680, chlorophylls that are the primary electron donor of PSII, and subsequent electron acceptors. It shares a non-heme iron and each subunit binds pheophytin, quinone, additional chlorophylls, carotenoids and lipids. There is also a Cl(-1) ion associated with D1 and D2, which is required for oxygen evolution. The PSII complex binds additional chlorophylls, carotenoids and specific lipids..

The protein resides in the plastid. Its subcellular location is the chloroplast thylakoid membrane. It catalyses the reaction 2 a plastoquinone + 4 hnu + 2 H2O = 2 a plastoquinol + O2. Its function is as follows. Photosystem II (PSII) is a light-driven water:plastoquinone oxidoreductase that uses light energy to abstract electrons from H(2)O, generating O(2) and a proton gradient subsequently used for ATP formation. It consists of a core antenna complex that captures photons, and an electron transfer chain that converts photonic excitation into a charge separation. The D1/D2 (PsbA/PsbD) reaction center heterodimer binds P680, the primary electron donor of PSII as well as several subsequent electron acceptors. D2 is needed for assembly of a stable PSII complex. This is Photosystem II D2 protein from Jasminum nudiflorum (Winter jasmine).